A 177-amino-acid chain; its full sequence is Large ribosomal subunit protein uL6 (177 aa).

This sequence belongs to the universal ribosomal protein uL6 family. As to quaternary structure, part of the 50S ribosomal subunit.

In terms of biological role, this protein binds to the 23S rRNA, and is important in its secondary structure. It is located near the subunit interface in the base of the L7/L12 stalk, and near the tRNA binding site of the peptidyltransferase center. The polypeptide is Large ribosomal subunit protein uL6 (Erythrobacter litoralis (strain HTCC2594)).